The primary structure comprises 366 residues: Variable large protein 10 (366 aa).

An N-terminal signal peptide occupies residues 1–18 (MRKRISAIIMTLFMVLAS). The N-palmitoyl cysteine moiety is linked to residue C19. C19 is lipidated: S-diacylglycerol cysteine.

The protein belongs to the variable large protein (Vlp) family. Beta subfamily.

Its subcellular location is the cell outer membrane. In terms of biological role, the Vlp and Vsp proteins are antigenically distinct proteins, only one vlp or vsp gene is transcriptionally active at any one time. Switching between these genes is a mechanism of host immune response evasion. The chain is Variable large protein 10 from Borrelia hermsii.